A 399-amino-acid polypeptide reads, in one-letter code: Small ribosomal subunit protein uS3m (399 aa).

Belongs to the universal ribosomal protein uS3 family.

It localises to the mitochondrion. Its function is as follows. Essential for mitochondrial protein synthesis and required for the maturation of small ribosomal subunits. The protein is Small ribosomal subunit protein uS3m of Penicillium urticae.